Here is an 800-residue protein sequence, read N- to C-terminus: MVSTQQRTDDDSSQPVKASLKSYGITEPLSIAGPSAADVKRNLELEKFLVDEGLYESKEETMRREEVVVRIDQIVKHWVKQLTRQRGYTDQMVEDANAVIFTFGSYRLGVHGPMADIDTLCVGPSYVNREEDFFIFFRDILAEMEEVTELQPVTDAHVPVMKFKFQGISIDLLYASISLLVIPQDLDISNSSVLCDVDEQTVRSLNGCRVADQILKLVPNSEHFRTTLRCLKYWAKKRGVYSNVTGFLGGVNWALLVARLCQFYPNAIPSMLVSRFFRVYTQWRWPNPVMLCAIEEDDLSFPVWDPRKNHRDRYHLMPIITPAYPCMNSSYNVSQSTLRVMTEQFQFGNTICQEIELNKQHWSSLFQQYMFFEAYKNYLQVDVLAADAEDLLAWKGWVESRFRQLTLKIERDTNGMLMCHPQPNEYVDTSKQFRHCAFFMGLQRADGFGGQECQQFDIRGTVDEFRQEVNMYMFWRPGMDVHVSHVRRRQLPSFVFPNGYKRSRQSRHQSQQCREPGDEGVGSLSDSVERYAKRKNDDEIMNSRPEKREKRASCSLHTLDAASPDSSGITTSGTPQIGIVPGPRAECLVTGDLVCNVTSLPNVEVEAEKFISKITELRKFSQYEHTSGSEQILEVDSRALVQSYHDLAEPVAKHVRPDLSALLACEGGQNKEIGHDMGSESINDTDTQHLPRRLNVNEDVDEVEREAKLGEIAGGVLWNGHCGRNLDHEGFVTPANLDSAVENRNLHSDGLFKSGLPEELQSNSLLSGTGKLDDGARSESLQNEMMRHVFLQPIIGLCKS.

ATP contacts are provided by residues 103-105 (FGS), 115-118 (ADID), Asp171, Lys232, Tyr241, and 250-251 (GV). Positions 116, 118, and 171 each coordinate Mg(2+). 2 short sequence motifs (nuclear localization signal) span residues 487 to 494 (RRRQLPSF) and 533 to 540 (KRKNDDEI). The segment at 497-576 (PNGYKRSRQS…SGITTSGTPQ (80 aa)) is disordered. The span at 527–538 (SVERYAKRKNDD) shows a compositional bias: basic and acidic residues. Residues 564–575 (PDSSGITTSGTP) are compositionally biased toward polar residues.

This sequence belongs to the poly(A) polymerase family. Monomer. Forms a complex with cleavage and polyadenylation specificity factor (CPSF) subunits CPSF100, CPSF30, FIPS5 and PABN2. It depends on Mg(2+) as a cofactor. Requires Mn(2+) as cofactor. In terms of tissue distribution, mostly expressed in flowers (highly in the style, receptacle and pedicel, but weakly in the vasculature of sepals) and hypocotyls, and, to a lower extent, in roots and stems. Barely detected in leaves (petioles and vascular system).

It localises to the nucleus. The protein localises to the cytoplasm. It catalyses the reaction RNA(n) + ATP = RNA(n)-3'-adenine ribonucleotide + diphosphate. Essential protein. Polymerase that creates the 3'-poly(A) tail of mRNA's. Also required for the endoribonucleolytic cleavage reaction at some polyadenylation sites. May acquire specificity through interaction with a cleavage and polyadenylation specificity factor (CPSF) at its C-terminus. Mediates the polyadenylation of RNAs that are associated with polynucleotide phosphorylase (e.g. PNP1). This Arabidopsis thaliana (Mouse-ear cress) protein is Nuclear poly(A) polymerase 2.